The chain runs to 112 residues: Urease subunit beta (112 aa).

It belongs to the urease beta subunit family. Heterotrimer of UreA (gamma), UreB (beta) and UreC (alpha) subunits. Three heterotrimers associate to form the active enzyme.

It localises to the cytoplasm. The enzyme catalyses urea + 2 H2O + H(+) = hydrogencarbonate + 2 NH4(+). It participates in nitrogen metabolism; urea degradation; CO(2) and NH(3) from urea (urease route): step 1/1. The polypeptide is Urease subunit beta (Thioalkalivibrio sulfidiphilus (strain HL-EbGR7)).